The chain runs to 121 residues: UPF0102 protein VP0448 (121 aa).

It belongs to the UPF0102 family.

The protein is UPF0102 protein VP0448 of Vibrio parahaemolyticus serotype O3:K6 (strain RIMD 2210633).